The sequence spans 498 residues: Cystathionine beta-synthase (498 aa).

Residues 1-25 form a disordered region; it reads MSAPEGPSKCTWTPNTTENTPHTTR. The segment covering 11-22 has biased composition (low complexity); sequence TWTPNTTENTPH. Lys73 carries the N6-(pyridoxal phosphate)lysine modification. Pyridoxal 5'-phosphate-binding positions include Asn103, 210–214, and Ser302; that span reads GTGGT. CBS domains lie at 374–430 and 435–497; these read TLPK…KKAV and VSKV…SQQK.

The protein belongs to the cysteine synthase/cystathionine beta-synthase family. It depends on pyridoxal 5'-phosphate as a cofactor.

The enzyme catalyses L-homocysteine + L-serine = L,L-cystathionine + H2O. It participates in amino-acid biosynthesis; L-cysteine biosynthesis; L-cysteine from L-homocysteine and L-serine: step 1/2. The polypeptide is Cystathionine beta-synthase (cysB) (Dictyostelium discoideum (Social amoeba)).